Reading from the N-terminus, the 881-residue chain is Valine--tRNA ligase (881 aa).

The 'HIGH' region motif lies at 42-52 (PNITGDLHVGH). The 'KMSKS' region motif lies at 554-558 (KMSKS). Lys557 contacts ATP.

Belongs to the class-I aminoacyl-tRNA synthetase family. ValS type 1 subfamily. As to quaternary structure, monomer.

The protein localises to the cytoplasm. The catalysed reaction is tRNA(Val) + L-valine + ATP = L-valyl-tRNA(Val) + AMP + diphosphate. Catalyzes the attachment of valine to tRNA(Val). As ValRS can inadvertently accommodate and process structurally similar amino acids such as threonine, to avoid such errors, it has a 'posttransfer' editing activity that hydrolyzes mischarged Thr-tRNA(Val) in a tRNA-dependent manner. The sequence is that of Valine--tRNA ligase from Wigglesworthia glossinidia brevipalpis.